The primary structure comprises 664 residues: DNA ligase (664 aa).

NAD(+) contacts are provided by residues 32-36 (DAEYD), 81-82 (SL), and E113. Residue K115 is the N6-AMP-lysine intermediate of the active site. Positions 136, 173, 289, and 313 each coordinate NAD(+). Residues C407, C410, C425, and C431 each coordinate Zn(2+). A BRCT domain is found at 586 to 664 (ASEQPFAGKT…EEQLQAALQS (79 aa)).

It belongs to the NAD-dependent DNA ligase family. LigA subfamily. It depends on Mg(2+) as a cofactor. Mn(2+) serves as cofactor.

The enzyme catalyses NAD(+) + (deoxyribonucleotide)n-3'-hydroxyl + 5'-phospho-(deoxyribonucleotide)m = (deoxyribonucleotide)n+m + AMP + beta-nicotinamide D-nucleotide.. Its function is as follows. DNA ligase that catalyzes the formation of phosphodiester linkages between 5'-phosphoryl and 3'-hydroxyl groups in double-stranded DNA using NAD as a coenzyme and as the energy source for the reaction. It is essential for DNA replication and repair of damaged DNA. This Aeromonas salmonicida (strain A449) protein is DNA ligase.